A 266-amino-acid polypeptide reads, in one-letter code: Pyrrolizixenacetamide deacetylase (266 aa).

T28 provides a ligand contact to acetate. Residue S94 is the Nucleophile of the active site. L95 contributes to the acetate binding site. Residues D215 and H242 each act as charge relay system in the active site. Residue H242 coordinates acetate.

This sequence belongs to the AB hydrolase superfamily. Homodimer.

The catalysed reaction is pyrrolizixenacetamide + H2O = 3-amino-5,6,7,7a-tetrahydro-1H-pyrrolizin-1-one + acetate + H(+). In terms of biological role, involved in the biosynthetic pathway of pyrrolizwilline, a pyrrolizidine alkaloid. Catalyzes the N-deacetylation of pyrrolizixenacetamide. The polypeptide is Pyrrolizixenacetamide deacetylase (Xenorhabdus hominickii).